Here is a 350-residue protein sequence, read N- to C-terminus: Eukaryotic translation initiation factor 3 subunit I (350 aa).

WD repeat units lie at residues 8 to 49, 51 to 89, 91 to 135, 149 to 188, 198 to 240, and 296 to 335; these read GHER…GTLE, HQGV…CVYT, DSPS…ATLS, SEGS…LVTS, EKNV…KVYK, and GHFG…QDFL.

This sequence belongs to the eIF-3 subunit I family. Component of the eukaryotic translation initiation factor 3 (eIF-3) complex.

It is found in the cytoplasm. Component of the eukaryotic translation initiation factor 3 (eIF-3) complex, which is involved in protein synthesis of a specialized repertoire of mRNAs and, together with other initiation factors, stimulates binding of mRNA and methionyl-tRNAi to the 40S ribosome. The eIF-3 complex specifically targets and initiates translation of a subset of mRNAs involved in cell proliferation. This is Eukaryotic translation initiation factor 3 subunit I from Candida albicans (strain SC5314 / ATCC MYA-2876) (Yeast).